The following is a 338-amino-acid chain: Methionyl-tRNA formyltransferase (338 aa).

(6S)-5,6,7,8-tetrahydrofolate is bound at residue 110–113 (SLLP).

Belongs to the Fmt family.

The catalysed reaction is L-methionyl-tRNA(fMet) + (6R)-10-formyltetrahydrofolate = N-formyl-L-methionyl-tRNA(fMet) + (6S)-5,6,7,8-tetrahydrofolate + H(+). Attaches a formyl group to the free amino group of methionyl-tRNA(fMet). The formyl group appears to play a dual role in the initiator identity of N-formylmethionyl-tRNA by promoting its recognition by IF2 and preventing the misappropriation of this tRNA by the elongation apparatus. This chain is Methionyl-tRNA formyltransferase, found in Parasynechococcus marenigrum (strain WH8102).